Consider the following 403-residue polypeptide: L-lactate oxidase (403 aa).

In terms of domain architecture, FMN hydroxy acid dehydrogenase spans 21 to 375; the sequence is EGSVDFVNVF…KHFKLRHNPY (355 aa). Residue Tyr47 participates in pyruvate binding. Residues 99 to 101, Ser128, and Gln150 each bind FMN; that span reads PVA. Tyr152 contacts pyruvate. Residue Thr178 participates in FMN binding. Pyruvate contacts are provided by Arg187 and Tyr220. Lys246 provides a ligand contact to FMN. Pyruvate is bound by residues His270 and Arg273. The active-site Proton acceptor is His270. Residues 301-305 and Arg325 each bind FMN; that span reads DSGVR.

It belongs to the FMN-dependent alpha-hydroxy acid dehydrogenase family. As to quaternary structure, homotetramer. Requires FMN as cofactor.

It catalyses the reaction (S)-lactate + O2 = pyruvate + H2O2. Catalyzes the oxidation of (S)-lactate (L-lactate) to pyruvate, with a reduction of O2 to H2O2. Is likely involved in the L-lactate aerobic metabolism of S.iniae that enables the bacterium to utilize L-lactate as an energy source for growth under aerobic conditions in the absence (or at low concentrations) of glucose. This chain is L-lactate oxidase, found in Streptococcus iniae (Streptococcus shiloi).